A 368-amino-acid chain; its full sequence is tRNA-specific 2-thiouridylase MnmA (368 aa).

Residues 11 to 18 (GMSGGVDS) and Met-37 each bind ATP. The segment at 97 to 99 (NPD) is interaction with target base in tRNA. The active-site Nucleophile is the Cys-102. Cys-102 and Cys-199 are oxidised to a cystine. Gly-127 lines the ATP pocket. Residues 149 to 151 (KDQ) are interaction with tRNA. Catalysis depends on Cys-199, which acts as the Cysteine persulfide intermediate. An interaction with tRNA region spans residues 311-312 (RY).

This sequence belongs to the MnmA/TRMU family. In terms of assembly, interacts with TusE.

The protein localises to the cytoplasm. The enzyme catalyses S-sulfanyl-L-cysteinyl-[protein] + uridine(34) in tRNA + AH2 + ATP = 2-thiouridine(34) in tRNA + L-cysteinyl-[protein] + A + AMP + diphosphate + H(+). Functionally, catalyzes the 2-thiolation of uridine at the wobble position (U34) of tRNA(Lys), tRNA(Glu) and tRNA(Gln), leading to the formation of s(2)U34, the first step of tRNA-mnm(5)s(2)U34 synthesis. Sulfur is provided by IscS, via a sulfur-relay system. Binds ATP and its substrate tRNAs. In Escherichia coli O139:H28 (strain E24377A / ETEC), this protein is tRNA-specific 2-thiouridylase MnmA.